Reading from the N-terminus, the 321-residue chain is Aspartate carbamoyltransferase catalytic subunit (321 aa).

Carbamoyl phosphate is bound by residues Arg65 and Thr66. Lys93 serves as a coordination point for L-aspartate. Residues Arg115, His143, and Gln146 each contribute to the carbamoyl phosphate site. Residues Arg176 and Arg230 each contribute to the L-aspartate site. Positions 271 and 272 each coordinate carbamoyl phosphate.

It belongs to the aspartate/ornithine carbamoyltransferase superfamily. ATCase family. Heterododecamer (2C3:3R2) of six catalytic PyrB chains organized as two trimers (C3), and six regulatory PyrI chains organized as three dimers (R2).

The catalysed reaction is carbamoyl phosphate + L-aspartate = N-carbamoyl-L-aspartate + phosphate + H(+). Its pathway is pyrimidine metabolism; UMP biosynthesis via de novo pathway; (S)-dihydroorotate from bicarbonate: step 2/3. Functionally, catalyzes the condensation of carbamoyl phosphate and aspartate to form carbamoyl aspartate and inorganic phosphate, the committed step in the de novo pyrimidine nucleotide biosynthesis pathway. The chain is Aspartate carbamoyltransferase catalytic subunit from Bartonella henselae (strain ATCC 49882 / DSM 28221 / CCUG 30454 / Houston 1) (Rochalimaea henselae).